The sequence spans 60 residues: Protein translocase subunit SecE (60 aa).

The chain crosses the membrane as a helical span at residues 31–51; the sequence is VIVVSTVIFFLVFFYALDLGI.

This sequence belongs to the SecE/SEC61-gamma family. Component of the Sec protein translocase complex. Heterotrimer consisting of SecY, SecE and SecG subunits. The heterotrimers can form oligomers, although 1 heterotrimer is thought to be able to translocate proteins. Interacts with the ribosome. Interacts with SecDF, and other proteins may be involved. Interacts with SecA.

Its subcellular location is the cell membrane. Essential subunit of the Sec protein translocation channel SecYEG. Clamps together the 2 halves of SecY. May contact the channel plug during translocation. The protein is Protein translocase subunit SecE of Staphylococcus aureus (strain Mu50 / ATCC 700699).